Consider the following 414-residue polypeptide: Peptide chain release factor subunit 1 (414 aa).

It belongs to the eukaryotic release factor 1 family. Heterodimer of two subunits, one of which binds GTP.

Its subcellular location is the cytoplasm. In terms of biological role, directs the termination of nascent peptide synthesis (translation) in response to the termination codons UAA, UAG and UGA. The polypeptide is Peptide chain release factor subunit 1 (prf1) (Pyrococcus abyssi (strain GE5 / Orsay)).